The chain runs to 513 residues: Microtubule-associated protein 70-5 (513 aa).

Disordered stretches follow at residues 1–20 (MTAAENPFVSDTSSLQSQLK), 60–81 (KLGATENQVDQKELERKKLEEE), 347–367 (FLTSGGGSKKRSSSQLRGSVT), and 393–413 (ANGLTDQHEEDSERKTEEDGN). The segment covering 9 to 18 (VSDTSSLQSQ) has biased composition (polar residues). The stretch at 10–322 (SDTSSLQSQL…LKLRLKTIED (313 aa)) forms a coiled coil. Basic and acidic residues predominate over residues 60 to 80 (KLGATENQVDQKELERKKLEE). Residues 190 to 400 (FLEKINRQKV…ITANGLTDQH (211 aa)) are required for targeting to microtubules. A coiled-coil region spans residues 426–501 (DRLQKEVIAL…EESKLCRKAK (76 aa)).

The protein belongs to the MAP70 family. In terms of assembly, interacts with MAP70.1 and itself.

The protein resides in the cytoplasm. The protein localises to the cytoskeleton. In terms of biological role, plant-specific protein that interact with microtubules and regulates microtubule dynamics. May play a role in anisotropic cell expansion and organ growth. In association with MAP70.1, is essential for the normal banding pattern of secondary cell wall and for the proper development of xylem tracheary elements and wood formation. The protein is Microtubule-associated protein 70-5 (MAP70.5) of Arabidopsis thaliana (Mouse-ear cress).